The sequence spans 638 residues: 1-deoxy-D-xylulose-5-phosphate synthase (638 aa).

Thiamine diphosphate is bound by residues histidine 78 and 119 to 121; that span reads AHS. Mg(2+) is bound at residue aspartate 150. Residues 151–152, asparagine 179, tyrosine 288, and glutamate 370 contribute to the thiamine diphosphate site; that span reads GS. Asparagine 179 lines the Mg(2+) pocket.

Belongs to the transketolase family. DXPS subfamily. As to quaternary structure, homodimer. Requires Mg(2+) as cofactor. The cofactor is thiamine diphosphate.

The enzyme catalyses D-glyceraldehyde 3-phosphate + pyruvate + H(+) = 1-deoxy-D-xylulose 5-phosphate + CO2. It functions in the pathway metabolic intermediate biosynthesis; 1-deoxy-D-xylulose 5-phosphate biosynthesis; 1-deoxy-D-xylulose 5-phosphate from D-glyceraldehyde 3-phosphate and pyruvate: step 1/1. Functionally, catalyzes the acyloin condensation reaction between C atoms 2 and 3 of pyruvate and glyceraldehyde 3-phosphate to yield 1-deoxy-D-xylulose-5-phosphate (DXP). This chain is 1-deoxy-D-xylulose-5-phosphate synthase, found in Brucella anthropi (strain ATCC 49188 / DSM 6882 / CCUG 24695 / JCM 21032 / LMG 3331 / NBRC 15819 / NCTC 12168 / Alc 37) (Ochrobactrum anthropi).